The sequence spans 75 residues: Penaeidin-3n (75 aa).

A signal peptide spans 1–19 (MRLVVCLVFLASFALVCQG). Glutamine 20 is subject to Pyrrolidone carboxylic acid. 2 disulfides stabilise this stretch: cysteine 44/cysteine 59 and cysteine 48/cysteine 66. Serine amide is present on serine 74.

It belongs to the penaeidin family.

Its subcellular location is the cytoplasmic granule. Its function is as follows. Antibacterial and antifungal activity. Presents chitin-binding activity. The chain is Penaeidin-3n from Penaeus setiferus (Atlantic white shrimp).